The chain runs to 694 residues: Ubiquitin-like modifier-activating enzyme ATG7 (694 aa).

A GXGXXG motif motif is present at residues 370 to 375; that stretch reads GAGTLG. Cys550 acts as the Glycyl thioester intermediate in catalysis. Positions 650–689 are homodimerization; that stretch reads ALQEKEYVAELSGLAEVQRRAEEMAAHVDWEEDDDLVDDG.

It belongs to the ATG7 family. As to quaternary structure, homodimer. Interacts with ATG8 through a thioester bond between Cys-550 and the C-terminal 'Gly-116' of ATG8 and with ATG12 through a thioester bond between Cys-550 and the C-terminal 'Gly-160' of ATG12. Also interacts with ATG3.

The protein resides in the cytoplasm. It is found in the preautophagosomal structure. Functionally, E1-like activating enzyme involved in the 2 ubiquitin-like systems required for cytoplasm to vacuole transport (Cvt) and autophagy. Activates ATG12 for its conjugation with ATG5 and ATG8 for its conjugation with phosphatidylethanolamine. Both systems are needed for the ATG8 association to Cvt vesicles and autophagosomes membranes. Autophagy is essential for maintenance of amino acid levels and protein synthesis under nitrogen starvation. Required for selective autophagic degradation of the nucleus (nucleophagy) as well as for mitophagy which contributes to regulate mitochondrial quantity and quality by eliminating the mitochondria to a basal level to fulfill cellular energy requirements and preventing excess ROS production. Autophagy is required for proper vegetative growth, asexual/sexual reproduction, and full virulence. Autophagy is particularly involved in the biosynthesis of deoxynivalenol (DON), an important virulence determinant. This Gibberella zeae (strain ATCC MYA-4620 / CBS 123657 / FGSC 9075 / NRRL 31084 / PH-1) (Wheat head blight fungus) protein is Ubiquitin-like modifier-activating enzyme ATG7.